A 330-amino-acid polypeptide reads, in one-letter code: Aspartate--ammonia ligase (330 aa).

This sequence belongs to the class-II aminoacyl-tRNA synthetase family. AsnA subfamily.

The protein resides in the cytoplasm. It carries out the reaction L-aspartate + NH4(+) + ATP = L-asparagine + AMP + diphosphate + H(+). It functions in the pathway amino-acid biosynthesis; L-asparagine biosynthesis; L-asparagine from L-aspartate (ammonia route): step 1/1. This chain is Aspartate--ammonia ligase, found in Streptococcus pyogenes serotype M6 (strain ATCC BAA-946 / MGAS10394).